The following is a 359-amino-acid chain: Nicotinate-nucleotide--dimethylbenzimidazole phosphoribosyltransferase (359 aa).

The Proton acceptor role is filled by Glu-318.

Belongs to the CobT family. In terms of assembly, homodimer.

The enzyme catalyses 5,6-dimethylbenzimidazole + nicotinate beta-D-ribonucleotide = alpha-ribazole 5'-phosphate + nicotinate + H(+). The protein operates within nucleoside biosynthesis; alpha-ribazole biosynthesis; alpha-ribazole from 5,6-dimethylbenzimidazole: step 1/2. Functionally, catalyzes the synthesis of alpha-ribazole-5'-phosphate from nicotinate mononucleotide (NAMN) and 5,6-dimethylbenzimidazole (DMB). The polypeptide is Nicotinate-nucleotide--dimethylbenzimidazole phosphoribosyltransferase (Escherichia coli (strain UTI89 / UPEC)).